The chain runs to 293 residues: Probable 2-(5''-triphosphoribosyl)-3'-dephosphocoenzyme-A synthase (293 aa).

This sequence belongs to the CitG/MdcB family.

The enzyme catalyses 3'-dephospho-CoA + ATP = 2'-(5''-triphospho-alpha-D-ribosyl)-3'-dephospho-CoA + adenine. Its function is as follows. Involved in the formation of 2-(5''-phosphoribosyl)-3'-dephosphocoenzyme-A, the prosthetic group of the acyl-carrier protein of the malonate decarboxylase. The polypeptide is Probable 2-(5''-triphosphoribosyl)-3'-dephosphocoenzyme-A synthase (Pseudomonas aeruginosa (strain ATCC 15692 / DSM 22644 / CIP 104116 / JCM 14847 / LMG 12228 / 1C / PRS 101 / PAO1)).